The following is a 416-amino-acid chain: Enterobactin exporter EntS (416 aa).

Topologically, residues 1 to 21 (MNKQSWLLNLSLLKTHPAFRA) are cytoplasmic. Residues 22–42 (VFLARFISIVSLGLLGVAVPV) traverse the membrane as a helical segment. The Periplasmic segment spans residues 43-55 (QIQMMTHSTWQVG). A helical transmembrane segment spans residues 56–76 (LSVTLTGGAMFVGLMVGGVLA). Residues 77 to 83 (DRYERKK) are Cytoplasmic-facing. A helical transmembrane segment spans residues 84–104 (VILLARGTCGIGFIGLCLNAL). Residues 105–109 (LPEPS) lie on the Periplasmic side of the membrane. The chain crosses the membrane as a helical span at residues 110–130 (LLAIYLLGLWDGFFASLGVTA). At 131–156 (LLAATPALVGRENLMQAGAITMLTVR) the chain is on the cytoplasmic side. Residues 157–177 (LGSVISPMIGGLLLATGGVAW) form a helical membrane-spanning segment. Asparagine 178 is a topological domain (periplasmic). Residues 179–199 (YGLAAAGTFITLLPLLSLPAL) form a helical membrane-spanning segment. The Cytoplasmic segment spans residues 200–218 (PPPPQPREHPLKSLLAGFR). Residues 219 to 239 (FLLASPLVGGIALLGGLLTMA) form a helical membrane-spanning segment. The Periplasmic segment spans residues 240–256 (SAVRVLYPALADNWQMS). Residues 257 to 277 (AAQIGFLYAAIPLGAAIGALT) traverse the membrane as a helical segment. Residues 278 to 287 (SGKLAHSARP) lie on the Cytoplasmic side of the membrane. The helical transmembrane segment at 288–307 (GLLMLLSTLGSFLAIGLFGL) threads the bilayer. The Periplasmic portion of the chain corresponds to 308–313 (MPMWIL). Residues 314–336 (GVVCLALFGWLSAVSSLLQYTML) form a helical membrane-spanning segment. Over 337 to 356 (QTQTPEAMLGRINGLWTAQN) the chain is Cytoplasmic. The chain crosses the membrane as a helical span at residues 357–377 (VTGDAIGAALLGGLGAMMTPV). Residue alanine 378 is a topological domain, periplasmic. Residues 379 to 399 (SASASGFGLLIIGVLLLLVLV) traverse the membrane as a helical segment. Topologically, residues 400 to 416 (ELRRFRQTPPQVTASDG) are cytoplasmic.

The protein belongs to the major facilitator superfamily. EntS (TC 2.A.1.38) family.

It is found in the cell inner membrane. Component of an export pathway for enterobactin. In Escherichia coli O157:H7, this protein is Enterobactin exporter EntS.